Consider the following 483-residue polypeptide: Glutamyl-tRNA(Gln) amidotransferase subunit A (483 aa).

Residues Lys77 and Ser152 each act as charge relay system in the active site. The Acyl-ester intermediate role is filled by Ser176.

Belongs to the amidase family. GatA subfamily. In terms of assembly, heterotrimer of A, B and C subunits.

It carries out the reaction L-glutamyl-tRNA(Gln) + L-glutamine + ATP + H2O = L-glutaminyl-tRNA(Gln) + L-glutamate + ADP + phosphate + H(+). Allows the formation of correctly charged Gln-tRNA(Gln) through the transamidation of misacylated Glu-tRNA(Gln) in organisms which lack glutaminyl-tRNA synthetase. The reaction takes place in the presence of glutamine and ATP through an activated gamma-phospho-Glu-tRNA(Gln). The sequence is that of Glutamyl-tRNA(Gln) amidotransferase subunit A from Listeria innocua serovar 6a (strain ATCC BAA-680 / CLIP 11262).